The sequence spans 2190 residues: Highly-reducing polyketide synthase 1 (2190 aa).

The 426-residue stretch at 6-431 (LTPVAIVGYA…GANAHVVLGA (426 aa)) folds into the Ketosynthase family 3 (KS3) domain. Residues C179, H315, and H355 each act as for beta-ketoacyl synthase activity in the active site. In terms of domain architecture, Malonyl-CoA:ACP transacylase (MAT) spans 541-857 (FVFTGQGAQW…VSVLARGQNA (317 aa)). The interval 925-1061 (NDLLGSLADW…GLVGVRNSPA (137 aa)) is N-terminal hotdog fold. The PKS/mFAS DH domain maps to 925 to 1246 (NDLLGSLADW…MTPLRESSGS (322 aa)). Catalysis depends on H957, which acts as the Proton acceptor; for dehydratase activity. The interval 1089-1246 (TETVDVQAMY…MTPLRESSGS (158 aa)) is C-terminal hotdog fold. Catalysis depends on D1154, which acts as the Proton donor; for dehydratase activity. One can recognise an Enoyl reductase (ER) domain in the interval 1494 to 1804 (GSLDSFYFVD…SGKSMGKLVI (311 aa)). One can recognise a Ketoreductase (KR) domain in the interval 1828 to 2005 (ASYLIVGGTG…GTSLDLTAVS (178 aa)). The Carrier domain maps to 2107-2184 (KALEVLYGAL…ELAKLISKKS (78 aa)). An O-(pantetheine 4'-phosphoryl)serine modification is found at S2144.

The cofactor is pantetheine 4'-phosphate.

Functionally, highly-reducing polyketide synthase; part of the gene cluster that mediates the biosynthesis of liamocins, glycolipids (also called heavy oils) composed of a single mannitol or arabitol headgroup linked to either three, four or even six 3,5-dihydroxydecanoic ester tail-groups. Within the pathway, PKS1 is responsible for biosynthesis of 3,5-dihydroxydecanoic acid from acetyl-CoA and malonyl-CoA. A phosphopantetheine transferase (PPTase) activates the HR-PKS. The esterase EST1 then catalyzes ester bond formation between 3,5-dihydroxydecanoic acid and mannitol (provided by the mannitol-1-phosphate 5-dehydrogenase and the NADP-dependent mannitol dehydrogenase) or arabinol (provided by the L-arabinitol 4-dehydrogenase). This Aureobasidium melanogenum (Aureobasidium pullulans var. melanogenum) protein is Highly-reducing polyketide synthase 1.